A 136-amino-acid polypeptide reads, in one-letter code: UPF0216 protein PF0452 (136 aa).

It belongs to the UPF0216 family.

This is UPF0216 protein PF0452 from Pyrococcus furiosus (strain ATCC 43587 / DSM 3638 / JCM 8422 / Vc1).